A 153-amino-acid polypeptide reads, in one-letter code: Endoribonuclease YbeY (153 aa).

H114, H118, and H124 together coordinate Zn(2+).

It belongs to the endoribonuclease YbeY family. It depends on Zn(2+) as a cofactor.

It localises to the cytoplasm. Its function is as follows. Single strand-specific metallo-endoribonuclease involved in late-stage 70S ribosome quality control and in maturation of the 3' terminus of the 16S rRNA. The chain is Endoribonuclease YbeY from Nitrosococcus oceani (strain ATCC 19707 / BCRC 17464 / JCM 30415 / NCIMB 11848 / C-107).